The primary structure comprises 221 residues: Small ribosomal subunit protein uS4c (221 aa).

A disordered region spans residues 26-53 (RKRTDNRCMPGQHRKKRNDSTKKTKNSK). The span at 37-53 (QHRKKRNDSTKKTKNSK) shows a compositional bias: basic residues. One can recognise an S4 RNA-binding domain in the interval 103–161 (MRLDNIVFRLGMAPTIPAARQLVNHGHIVVNNKKVDISSYQCQSQDVISVTKNKTIRTL).

This sequence belongs to the universal ribosomal protein uS4 family. Part of the 30S ribosomal subunit. Contacts protein S5. The interaction surface between S4 and S5 is involved in control of translational fidelity.

The protein resides in the plastid. The protein localises to the chloroplast. Functionally, one of the primary rRNA binding proteins, it binds directly to 16S rRNA where it nucleates assembly of the body of the 30S subunit. Its function is as follows. With S5 and S12 plays an important role in translational accuracy. The sequence is that of Small ribosomal subunit protein uS4c (rps4) from Pleurastrum terricola (Filamentous green alga).